The following is a 412-amino-acid chain: Acyl-[acyl-carrier-protein] hydrolase FATB3, chloroplastic (412 aa).

The span at 1–25 (MVAAAASSAFFSFPTPGTSPKPGKF) shows a compositional bias: low complexity. The N-terminal 50 residues, 1-50 (MVAAAASSAFFSFPTPGTSPKPGKFGNWPSSLSIPFNPKSNHNGGIQVKA), are a transit peptide targeting the chloroplast. The interval 1-63 (MVAAAASSAF…AHPKANGSAV (63 aa)) is disordered. A compositionally biased stretch (polar residues) spans 28–44 (WPSSLSIPFNPKSNHNG). Residues asparagine 310, histidine 312, and cysteine 347 contribute to the active site. Residues 393 to 412 (NAGATGAVSTGKTSNGNSVS) are disordered. Polar residues predominate over residues 399–412 (AVSTGKTSNGNSVS).

The protein belongs to the acyl-ACP thioesterase family.

It is found in the plastid. The protein localises to the chloroplast. It carries out the reaction tetradecanoyl-[ACP] + H2O = tetradecanoate + holo-[ACP] + H(+). Functionally, plays an essential role in chain termination during de novo fatty acid synthesis. Possesses thioesterase activity for medium chain acyl-ACPs. Main substrate is 14:0. This is Acyl-[acyl-carrier-protein] hydrolase FATB3, chloroplastic from Cuphea viscosissima (Blue waxweed).